The sequence spans 229 residues: MAQKKQLYVFSDFDGTITLQDSNDYLTDNFGMGNANRVNLNQQVLDGSISFRDAFAKMLDSVHLSYDEALEVLKKNVAIDPSFKPFYEWCKSQDIRVIILSSGMEPFIRALFEQYLGKEEASSIEIVSNDINVHPDGQWNIVYHDDSHFGHDKSLTIRPYAQLPESKRPHMVYCGDGVSDLSAAKETEHLFAKKGRDLIKYCEREKISFSEFETFADIHKDLQKLFFSS.

The Nucleophile role is filled by D12. Mg(2+)-binding residues include D12, D14, and D176. The Proton donor role is filled by D14.

Belongs to the HAD-like hydrolase superfamily. As to quaternary structure, component of the mst2 complex composed of at least eaf6, mst2, nto1, pdp3, ptf1, ptf2 and tfg3. Requires Mg(2+) as cofactor.

The protein localises to the cytoplasm. It is found in the nucleus. It carries out the reaction D-ribitol 5-phosphate + H2O = ribitol + phosphate. The enzyme catalyses D-sorbitol 6-phosphate + H2O = D-sorbitol + phosphate. It catalyses the reaction sn-glycerol 1-phosphate + H2O = glycerol + phosphate. The catalysed reaction is D-erythrose 4-phosphate + H2O = D-erythrose + phosphate. Functionally, component of the mst2 complex which is a highly specific H3 lysine 14 (H3K14) acetyltransferase that functions together with gcn5 to regulate global levels of H3K14 acetylation (H3K14ac), critical for DNA damage checkpoint activation. Its function is as follows. May also function as a sugar alcohol (polyol) phosphatase that prevents accumulation of toxic levels of polyol phosphates, which can impair glycolysis by inhibiting glucose-6-phosphate isomerase. This is Pdp3-interacting factor 1 from Schizosaccharomyces pombe (strain 972 / ATCC 24843) (Fission yeast).